The chain runs to 368 residues: MLRNKDRSSNKGNLAVTAVALQDHLLHDLQLGHLSVADPCKIKARKKEKKSKSLKRDATAIIDTGLRKSTEGPNMEDPEKEYVLDPTPPPLTLAQKLGLLPPPPLPLSSDEWERVKQRSLLQGDSIQPCPICKEEFELHPQVLLSCSHVFHRACLQAFEKFTNKKTCPLCRKNQYQTRVIHDGARLFRVKCATRIQAYWRGYIVRKWYRNLRKIIPPSDAKLRRKFFEEKFTEISHRILCSYNTNIDELFSEIDVCLAVNRSILQQLDERCGQIITKEDWEKIQAQAAHHEIYECSICLTPLSFHGDGRQAAIGTSSQRPRETVLLSCAHLFHNACLLALEEFSLGDNAPFHVCPLCRSCYQKKIVEC.

The interval 45–82 (RKKEKKSKSLKRDATAIIDTGLRKSTEGPNMEDPEKEY) is disordered. The RING-type 1; atypical zinc finger occupies 129–171 (CPICKEEFELHPQVLLSCSHVFHRACLQAFEKFTNKKTCPLCR). Positions 188 to 217 (RVKCATRIQAYWRGYIVRKWYRNLRKIIPP) constitute an IQ domain. Residues 295–358 (CSICLTPLSF…APFHVCPLCR (64 aa)) form an RING-type 2; atypical zinc finger.

It localises to the cytoplasm. Its function is as follows. May play a role in sperm formation. This chain is RING finger protein 32 (Rnf32), found in Mus musculus (Mouse).